The chain runs to 584 residues: UvrABC system protein C (584 aa).

The GIY-YIG domain occupies 12-89; sequence NKPGCYLFLN…IKKYRPKYNV (78 aa). Positions 194–229 constitute a UVR domain; the sequence is NQVKQTLVKQMQKASDNLQFEQAKRIKDQITSLDFI.

This sequence belongs to the UvrC family. As to quaternary structure, interacts with UvrB in an incision complex.

Its subcellular location is the cytoplasm. The UvrABC repair system catalyzes the recognition and processing of DNA lesions. UvrC both incises the 5' and 3' sides of the lesion. The N-terminal half is responsible for the 3' incision and the C-terminal half is responsible for the 5' incision. In Mycoplasma capricolum subsp. capricolum (strain California kid / ATCC 27343 / NCTC 10154), this protein is UvrABC system protein C.